A 74-amino-acid chain; its full sequence is Antimicrobial peptide ToAp1 (74 aa).

An N-terminal signal peptide occupies residues 1–22; it reads MQMKYLIPIFFLVLIVADHCHA. K39 carries the post-translational modification Lysine amide. Residues 40–74 constitute a propeptide that is removed on maturation; it reads GRRKRDITAQIEQYRNIQKREAAELEELLANLPVY.

The protein belongs to the non-disulfide-bridged peptide (NDBP) superfamily. Short antimicrobial peptide (group 4) family. Expressed by the venom gland.

The protein localises to the secreted. Antimicrobial peptide. Is able to kill Mycobacterium abscessus subsp. massiliense in a dose-dependent manner. Has antifungal activity against Candida spp. and one Cryptococcus neoformans strains with MICs values ranging from 12.5 to 200 uM. Also shows an inhibitory activity on C.albicans biofilms at high concentrations. Shows low cytotoxic activity and has weak hemolytic activity on human erythrocytes. Shows anti-inflammatory activities, since it decreases release of pro-inflammatory cytokines, and increases release of anti-inflammatory cytokines. Acts by blocking the Toll-like receptor 4 (TLR4). In addition, decreases the expression of costimulatory molecules such as CD80 and CD86 in LPS-stimulated cells. In vivo, does not induce immune cell migration. Helical wheel projections predict an amphipathic peptide with distinct hydrophobic and hydrophilic faces. This is Antimicrobial peptide ToAp1 from Tityus obscurus (Amazonian scorpion).